Reading from the N-terminus, the 322-residue chain is Quinolinate synthase (322 aa).

Residues histidine 37 and serine 54 each contribute to the iminosuccinate site. Cysteine 99 is a [4Fe-4S] cluster binding site. Residues 125-127 (YIN) and serine 142 each bind iminosuccinate. [4Fe-4S] cluster is bound at residue cysteine 185. Residues 211 to 213 (HPE) and threonine 228 contribute to the iminosuccinate site. Cysteine 278 is a [4Fe-4S] cluster binding site.

The protein belongs to the quinolinate synthase family. Type 2 subfamily. It depends on [4Fe-4S] cluster as a cofactor.

The protein resides in the cytoplasm. The catalysed reaction is iminosuccinate + dihydroxyacetone phosphate = quinolinate + phosphate + 2 H2O + H(+). Its pathway is cofactor biosynthesis; NAD(+) biosynthesis; quinolinate from iminoaspartate: step 1/1. Catalyzes the condensation of iminoaspartate with dihydroxyacetone phosphate to form quinolinate. This chain is Quinolinate synthase, found in Prosthecochloris aestuarii (strain DSM 271 / SK 413).